A 335-amino-acid polypeptide reads, in one-letter code: Glycerol-3-phosphate dehydrogenase [NAD(P)+] (335 aa).

The NADPH site is built by Ser-12, Trp-13, and Lys-107. Positions 107, 138, and 140 each coordinate sn-glycerol 3-phosphate. Residue Ala-142 coordinates NADPH. 5 residues coordinate sn-glycerol 3-phosphate: Lys-193, Asp-246, Ser-256, Arg-257, and Asn-258. The active-site Proton acceptor is Lys-193. NADPH is bound at residue Arg-257. Positions 281 and 283 each coordinate NADPH.

This sequence belongs to the NAD-dependent glycerol-3-phosphate dehydrogenase family.

It localises to the cytoplasm. The enzyme catalyses sn-glycerol 3-phosphate + NAD(+) = dihydroxyacetone phosphate + NADH + H(+). It catalyses the reaction sn-glycerol 3-phosphate + NADP(+) = dihydroxyacetone phosphate + NADPH + H(+). Its pathway is membrane lipid metabolism; glycerophospholipid metabolism. Its function is as follows. Catalyzes the reduction of the glycolytic intermediate dihydroxyacetone phosphate (DHAP) to sn-glycerol 3-phosphate (G3P), the key precursor for phospholipid synthesis. This is Glycerol-3-phosphate dehydrogenase [NAD(P)+] from Citrifermentans bemidjiense (strain ATCC BAA-1014 / DSM 16622 / JCM 12645 / Bem) (Geobacter bemidjiensis).